The chain runs to 296 residues: Formylmethanofuran--tetrahydromethanopterin formyltransferase-like protein (296 aa).

This sequence belongs to the FTR family.

The sequence is that of Formylmethanofuran--tetrahydromethanopterin formyltransferase-like protein (ehaS) from Methanothermobacter marburgensis (strain ATCC BAA-927 / DSM 2133 / JCM 14651 / NBRC 100331 / OCM 82 / Marburg) (Methanobacterium thermoautotrophicum).